The primary structure comprises 199 residues: Recombination protein RecR (199 aa).

Residues 57 to 72 (CQSCRTFTEETYCPIC) form a C4-type zinc finger. Residues 81–176 (EVICVVETPA…TVSRIAHGVP (96 aa)) enclose the Toprim domain.

It belongs to the RecR family.

Functionally, may play a role in DNA repair. It seems to be involved in an RecBC-independent recombinational process of DNA repair. It may act with RecF and RecO. The sequence is that of Recombination protein RecR from Shewanella pealeana (strain ATCC 700345 / ANG-SQ1).